A 344-amino-acid chain; its full sequence is Serpentine receptor class alpha-27 (344 aa).

Transmembrane regions (helical) follow at residues 28–48 (SIWM…TFYL), 67–87 (QILL…FLEI), 128–148 (GLLS…TVYV), 157–177 (MLIT…YGGV), 203–223 (AIFW…LLNI), 252–272 (ICSV…ALAI), and 287–307 (INIQ…VLIY).

It belongs to the nematode receptor-like protein sra family.

It localises to the membrane. This chain is Serpentine receptor class alpha-27 (sra-27), found in Caenorhabditis elegans.